We begin with the raw amino-acid sequence, 453 residues long: AP-4 complex subunit mu-1 (453 aa).

One can recognise an MHD domain in the interval 184–452 (KNEVFLDVVE…LSHSNAYVIR (269 aa)). Residues 383–403 (PGLQGPPSRGPSPSAPPLGLG) are disordered.

This sequence belongs to the adaptor complexes medium subunit family. In terms of assembly, adaptor protein complex 4 (AP-4) is a heterotetramer composed of two large adaptins (epsilon-type subunit AP4E1 and beta-type subunit AP4B1), a medium adaptin (mu-type subunit AP4M1) and a small adaptin (sigma-type AP4S1). Interacts with tyrosine-based sorting signals on the cytoplasmic tail of cargo proteins such as APP, ATG9A, LAMP2 and NAGPA. Interacts with the C-terminal domain of GRID2. Interacts with GRIA1 and GRIA2; the interaction is indirect via CACNG3. Interacts with CACNG3; CACNG3 associates GRIA1 and GRIA2 with the adaptor protein complex 4 (AP-4) to target them to the somatodendritic compartment of neurons. Interacts with HOOK1 and HOOK2; the interactions are direct, mediate the interaction between FTS-Hook-FHIP (FHF) complex and AP-4 and the perinuclear distribution of AP-4. As to expression, high levels in the olfactory bulb, the cerebral cortex, the granule and Purkinje cell layers of the cerebellar cortex and the CA3 region of the hippocampus. Low levels found in molecular layer of cerebellum.

It localises to the golgi apparatus. It is found in the trans-Golgi network membrane. Its subcellular location is the early endosome. Component of the adaptor protein complex 4 (AP-4). Adaptor protein complexes are vesicle coat components involved both in vesicle formation and cargo selection. They control the vesicular transport of proteins in different trafficking pathways. AP-4 forms a non clathrin-associated coat on vesicles departing the trans-Golgi network (TGN) and may be involved in the targeting of proteins from the trans-Golgi network (TGN) to the endosomal-lysosomal system. It is also involved in protein sorting to the basolateral membrane in epithelial cells and the proper asymmetric localization of somatodendritic proteins in neurons. Within AP-4, the mu-type subunit AP4M1 is directly involved in the recognition and binding of tyrosine-based sorting signals found in the cytoplasmic part of cargos. The adaptor protein complex 4 (AP-4) may also recognize other types of sorting signal. This is AP-4 complex subunit mu-1 from Rattus norvegicus (Rat).